We begin with the raw amino-acid sequence, 207 residues long: MFFVTPAYAEEAPAAATGTDAHAAPAAGEVHTETGVAEGEHARGPFPPFDSTTYASQLLWLVITFSVFYLLMQKVIAPRIGAILDQRHTRLSQDLEEAGRLKAEADAAVQTYEGELAAARAKSNAIGAAARDAAKLKAEEDRRAVEASLSEKIKAAEVRIADIKAKAFADVGTIAEETAAAVVEQLIGGTAAQADVAAAVAAAKKEA.

A helical membrane pass occupies residues 53–72; that stretch reads TYASQLLWLVITFSVFYLLM.

It belongs to the ATPase B chain family. F-type ATPases have 2 components, F(1) - the catalytic core - and F(0) - the membrane proton channel. F(1) has five subunits: alpha(3), beta(3), gamma(1), delta(1), epsilon(1). F(0) has three main subunits: a(1), b(2) and c(10-14). The alpha and beta chains form an alternating ring which encloses part of the gamma chain. F(1) is attached to F(0) by a central stalk formed by the gamma and epsilon chains, while a peripheral stalk is formed by the delta and b chains.

It is found in the cell inner membrane. Functionally, f(1)F(0) ATP synthase produces ATP from ADP in the presence of a proton or sodium gradient. F-type ATPases consist of two structural domains, F(1) containing the extramembraneous catalytic core and F(0) containing the membrane proton channel, linked together by a central stalk and a peripheral stalk. During catalysis, ATP synthesis in the catalytic domain of F(1) is coupled via a rotary mechanism of the central stalk subunits to proton translocation. In terms of biological role, component of the F(0) channel, it forms part of the peripheral stalk, linking F(1) to F(0). The b'-subunit is a diverged and duplicated form of b found in plants and photosynthetic bacteria. The sequence is that of ATP synthase subunit b 2 (atpF2) from Rhizobium leguminosarum bv. trifolii (strain WSM2304).